The following is a 180-amino-acid chain: ATP-dependent protease subunit HslV (180 aa).

The active site involves threonine 5. Na(+) is bound by residues glycine 165, cysteine 168, and threonine 171.

Belongs to the peptidase T1B family. HslV subfamily. In terms of assembly, a double ring-shaped homohexamer of HslV is capped on each side by a ring-shaped HslU homohexamer. The assembly of the HslU/HslV complex is dependent on binding of ATP.

Its subcellular location is the cytoplasm. It carries out the reaction ATP-dependent cleavage of peptide bonds with broad specificity.. Allosterically activated by HslU binding. Functionally, protease subunit of a proteasome-like degradation complex believed to be a general protein degrading machinery. The sequence is that of ATP-dependent protease subunit HslV from Helicobacter acinonychis (strain Sheeba).